A 117-amino-acid chain; its full sequence is Large ribosomal subunit protein uL18 (117 aa).

It belongs to the universal ribosomal protein uL18 family. In terms of assembly, part of the 50S ribosomal subunit; part of the 5S rRNA/L5/L18/L25 subcomplex. Contacts the 5S and 23S rRNAs.

In terms of biological role, this is one of the proteins that bind and probably mediate the attachment of the 5S RNA into the large ribosomal subunit, where it forms part of the central protuberance. In Cronobacter sakazakii (strain ATCC BAA-894) (Enterobacter sakazakii), this protein is Large ribosomal subunit protein uL18.